The following is a 448-amino-acid chain: tRNA modification GTPase MnmE (448 aa).

(6S)-5-formyl-5,6,7,8-tetrahydrofolate contacts are provided by Arg-22, Glu-79, and Lys-118. One can recognise a TrmE-type G domain in the interval 214–371 (GLHVVLAGQP…LRQELLRIAG (158 aa)). Asn-224 serves as a coordination point for K(+). Residues 224–229 (NVGKSS), 243–249 (TPIAGTT), and 268–271 (DTAG) each bind GTP. Position 228 (Ser-228) interacts with Mg(2+). Thr-243, Ile-245, and Thr-248 together coordinate K(+). Thr-249 lines the Mg(2+) pocket. Lys-448 serves as a coordination point for (6S)-5-formyl-5,6,7,8-tetrahydrofolate.

Belongs to the TRAFAC class TrmE-Era-EngA-EngB-Septin-like GTPase superfamily. TrmE GTPase family. In terms of assembly, homodimer. Heterotetramer of two MnmE and two MnmG subunits. K(+) is required as a cofactor.

The protein resides in the cytoplasm. Functionally, exhibits a very high intrinsic GTPase hydrolysis rate. Involved in the addition of a carboxymethylaminomethyl (cmnm) group at the wobble position (U34) of certain tRNAs, forming tRNA-cmnm(5)s(2)U34. In Dechloromonas aromatica (strain RCB), this protein is tRNA modification GTPase MnmE.